The sequence spans 869 residues: Structure-specific endonuclease subunit SLX4 (869 aa).

Positions serine 40 to serine 59 are enriched in low complexity. Disordered regions lie at residues serine 40–aspartate 79, asparagine 92–glycine 116, lysine 165–leucine 199, glycine 293–lysine 323, threonine 351–glutamate 388, alanine 418–asparagine 437, and lysine 630–threonine 774. The span at alanine 63–aspartate 79 shows a compositional bias: basic and acidic residues. 2 stretches are compositionally biased toward polar residues: residues lysine 165–proline 174 and leucine 294–serine 311. Residues lysine 312–proline 322 are compositionally biased toward basic residues. Polar residues-rich tracts occupy residues valine 647 to glycine 657 and serine 664 to valine 673. Over residues valine 688 to lysine 700 the composition is skewed to low complexity. Positions isoleucine 765–threonine 774 are enriched in polar residues.

This sequence belongs to the SLX4 family. As to quaternary structure, forms a heterodimer with SLX1. Phosphorylated in response to DNA damage.

It is found in the nucleus. Its function is as follows. Regulatory subunit of the SLX1-SLX4 structure-specific endonuclease that resolves DNA secondary structures generated during DNA repair and recombination. Has endonuclease activity towards branched DNA substrates, introducing single-strand cuts in duplex DNA close to junctions with ss-DNA. In Paracoccidioides brasiliensis (strain Pb18), this protein is Structure-specific endonuclease subunit SLX4.